The primary structure comprises 410 residues: Dual-specificity RNA methyltransferase RlmN (410 aa).

Glutamate 123 functions as the Proton acceptor in the catalytic mechanism. The region spanning 129 to 378 (EEGRGTLCIS…IRTPRGRDIL (250 aa)) is the Radical SAM core domain. A disulfide bridge connects residues cysteine 136 and cysteine 381. 3 residues coordinate [4Fe-4S] cluster: cysteine 143, cysteine 147, and cysteine 150. S-adenosyl-L-methionine contacts are provided by residues 207–208 (GE), serine 239, 261–263 (SLH), and asparagine 338. Residue cysteine 381 is the S-methylcysteine intermediate of the active site.

This sequence belongs to the radical SAM superfamily. RlmN family. Requires [4Fe-4S] cluster as cofactor.

The protein resides in the cytoplasm. It carries out the reaction adenosine(2503) in 23S rRNA + 2 reduced [2Fe-2S]-[ferredoxin] + 2 S-adenosyl-L-methionine = 2-methyladenosine(2503) in 23S rRNA + 5'-deoxyadenosine + L-methionine + 2 oxidized [2Fe-2S]-[ferredoxin] + S-adenosyl-L-homocysteine. The catalysed reaction is adenosine(37) in tRNA + 2 reduced [2Fe-2S]-[ferredoxin] + 2 S-adenosyl-L-methionine = 2-methyladenosine(37) in tRNA + 5'-deoxyadenosine + L-methionine + 2 oxidized [2Fe-2S]-[ferredoxin] + S-adenosyl-L-homocysteine. In terms of biological role, specifically methylates position 2 of adenine 2503 in 23S rRNA and position 2 of adenine 37 in tRNAs. m2A2503 modification seems to play a crucial role in the proofreading step occurring at the peptidyl transferase center and thus would serve to optimize ribosomal fidelity. The protein is Dual-specificity RNA methyltransferase RlmN of Mesorhizobium japonicum (strain LMG 29417 / CECT 9101 / MAFF 303099) (Mesorhizobium loti (strain MAFF 303099)).